The primary structure comprises 191 residues: Holliday junction branch migration complex subunit RuvA (191 aa).

The tract at residues 1 to 63 (MIRYLRGLVL…EEGLSLYGFP (63 aa)) is domain I. The interval 64–136 (DEENLALFEL…LKGKVPPHLL (73 aa)) is domain II. The tract at residues 136-140 (LAGEK) is flexible linker. A domain III region spans residues 141–191 (VESEAAEEAVMALAALGFKEAQARAVVLDLLAQNPKARAQDLIKEALKRLR).

Belongs to the RuvA family. In terms of assembly, homotetramer. Forms an RuvA(8)-RuvB(12)-Holliday junction (HJ) complex. HJ DNA is sandwiched between 2 RuvA tetramers; dsDNA enters through RuvA and exits via RuvB. An RuvB hexamer assembles on each DNA strand where it exits the tetramer. Each RuvB hexamer is contacted by two RuvA subunits (via domain III) on 2 adjacent RuvB subunits; this complex drives branch migration. In the full resolvosome a probable DNA-RuvA(4)-RuvB(12)-RuvC(2) complex forms which resolves the HJ.

The protein resides in the cytoplasm. Functionally, the RuvA-RuvB-RuvC complex processes Holliday junction (HJ) DNA during genetic recombination and DNA repair, while the RuvA-RuvB complex plays an important role in the rescue of blocked DNA replication forks via replication fork reversal (RFR). RuvA specifically binds to HJ cruciform DNA, conferring on it an open structure. The RuvB hexamer acts as an ATP-dependent pump, pulling dsDNA into and through the RuvAB complex. HJ branch migration allows RuvC to scan DNA until it finds its consensus sequence, where it cleaves and resolves the cruciform DNA. This is Holliday junction branch migration complex subunit RuvA from Thermus thermophilus (strain ATCC BAA-163 / DSM 7039 / HB27).